The sequence spans 508 residues: Cobalamin biosynthesis protein CobIJ (508 aa).

The interval methionine 1–alanine 243 is precorrin-2 C20-methyltransferase. A precorrin-3 methylase region spans residues leucine 244 to aspartate 508. Residues proline 489–aspartate 508 are disordered.

It belongs to the precorrin methyltransferase family.

The catalysed reaction is precorrin-2 + S-adenosyl-L-methionine = precorrin-3A + S-adenosyl-L-homocysteine + H(+). It carries out the reaction precorrin-3B + S-adenosyl-L-methionine = precorrin-4 + S-adenosyl-L-homocysteine + 3 H(+). It participates in cofactor biosynthesis; adenosylcobalamin biosynthesis; cob(II)yrinate a,c-diamide from precorrin-2 (aerobic route): step 1/10. It functions in the pathway cofactor biosynthesis; adenosylcobalamin biosynthesis; cob(II)yrinate a,c-diamide from precorrin-2 (aerobic route): step 3/10. Methylates precorrin-2 at the C-20 position to produce precorrin-3A. The protein is Cobalamin biosynthesis protein CobIJ (cobIJ) of Mycobacterium bovis (strain ATCC BAA-935 / AF2122/97).